The primary structure comprises 231 residues: Cytidylate kinase (231 aa).

12–20 (GPSGAGKGT) serves as a coordination point for ATP.

It belongs to the cytidylate kinase family. Type 1 subfamily.

The protein localises to the cytoplasm. The enzyme catalyses CMP + ATP = CDP + ADP. It carries out the reaction dCMP + ATP = dCDP + ADP. The chain is Cytidylate kinase from Shewanella amazonensis (strain ATCC BAA-1098 / SB2B).